The primary structure comprises 51 residues: Protein YrhD (51 aa).

The polypeptide is Protein YrhD (yrhD) (Escherichia coli (strain K12)).